Reading from the N-terminus, the 397-residue chain is Phosphoglycerate kinase (397 aa).

Substrate contacts are provided by residues 21 to 23 (DFN), Arg-37, 60 to 63 (HLGR), Arg-119, and Arg-152. ATP is bound by residues Lys-202, Gly-294, Glu-325, and 351-354 (GGDS).

The protein belongs to the phosphoglycerate kinase family. Monomer.

It is found in the cytoplasm. It catalyses the reaction (2R)-3-phosphoglycerate + ATP = (2R)-3-phospho-glyceroyl phosphate + ADP. It functions in the pathway carbohydrate degradation; glycolysis; pyruvate from D-glyceraldehyde 3-phosphate: step 2/5. The chain is Phosphoglycerate kinase from Pseudothermotoga lettingae (strain ATCC BAA-301 / DSM 14385 / NBRC 107922 / TMO) (Thermotoga lettingae).